The chain runs to 538 residues: Cytochrome P450 monooxygenase flvC (538 aa).

The chain crosses the membrane as a helical span at residues 17 to 37 (TVLIAGLLVYWVGSAIFLAVL). Cysteine 478 lines the heme pocket.

It belongs to the cytochrome P450 family. It depends on heme as a cofactor.

Its subcellular location is the membrane. It carries out the reaction pre-flavunoidine + reduced [NADPH--hemoprotein reductase] + O2 = 10-hydroxy-pre-flavunoidine + oxidized [NADPH--hemoprotein reductase] + H2O + H(+). It participates in secondary metabolite biosynthesis; terpenoid biosynthesis. Cytochrome P450 monooxygenase; part of the gene cluster that mediates the biosynthesis of flavunoidine, an alkaloidal terpenoid with a tetracyclic cage-like core connected to dimethylcadaverine via a C-N bond and acylated with 5,5-dimethyl-L-pipecolate. The tetracyclic core is synthesized by the terpene cyclase flvE and the cytochrome P450 monooxygenase flvD. The terpene cyclase flvE catalyzes the cyclization of farnesyl pyrophosphate (FPP) to form (1R,4R,5S)-(+)-acoradiene and the cytochrome P450 monooxygenase flvD is then responsible for oxidative conversion of (1R,4R,5S)-(+)-acoradiene into the tetracyclic cage present in the final product flavunoidine. In parallel, the N-methyltransferase flvH dimethylates L-lysine to give N,N-dimethyl-L-Lysin which is decarboxylated by flvG to afford dimethylcadaverine. The terpene cyclase-like protein flvF is the enzyme that attaches the dimethylcadaverine precusor at the C-7 of the tetracyclic cage to yield pre-flavunoidine. The cytochrome monooxygenase flvC hydroxylates the C-10 position of pre-flavunoidine whereas the NRPS flvI acylates the terpenoid core at the hydroxylated C-10 with dimethylpipecolate to yield final flavunoidine. The bifunctional enzyme flvA and the dehydrogenase flvB are responsible for the synthesis of the dimethylpipecolate precursor. The PLP-dependent lyase domain of flvA might use L-O-acetyl-homoserine and alpha-keto-isovalerate to form an intermediary ketone that can cyclize intramolecularly to yield an imine. The imine can be reduced by flvB to yield the 6-carboxylated pipecolate. The C-terminal alpha-KG-dependent oxygenase domain of flvA is then proposed to catalyze the decarboxylation to yield dimethylpipecolate. This Aspergillus flavus (strain ATCC 200026 / FGSC A1120 / IAM 13836 / NRRL 3357 / JCM 12722 / SRRC 167) protein is Cytochrome P450 monooxygenase flvC.